Consider the following 777-residue polypeptide: Homoaconitase, mitochondrial (777 aa).

The N-terminal 35 residues, 1–35, are a transit peptide targeting the mitochondrion; the sequence is MFKRTGSLLLRCRASRVPVIGRPLISLSTSSTSLS. Residues 47–74 form a disordered region; the sequence is LRRYTEASSSTTQTSPSSSSWPAPDAAP. Low complexity predominate over residues 52–74; the sequence is EASSSTTQTSPSSSSWPAPDAAP. 3 residues coordinate [4Fe-4S] cluster: C398, C466, and C469.

Belongs to the aconitase/IPM isomerase family. Requires [4Fe-4S] cluster as cofactor.

The protein localises to the mitochondrion. It carries out the reaction (2R,3S)-homoisocitrate = cis-homoaconitate + H2O. The protein operates within amino-acid biosynthesis; L-lysine biosynthesis via AAA pathway; L-alpha-aminoadipate from 2-oxoglutarate: step 3/5. Its function is as follows. Catalyzes the reversible hydration of cis-homoaconitate to (2R,3S)-homoisocitrate, a step in the alpha-aminoadipate pathway for lysine biosynthesis. The chain is Homoaconitase, mitochondrial (lys4) from Aspergillus fumigatus (strain ATCC MYA-4609 / CBS 101355 / FGSC A1100 / Af293) (Neosartorya fumigata).